Consider the following 479-residue polypeptide: Bifunctional protein HldE (479 aa).

The segment at 1-322 (MLAETQLAPI…AALERTAAQI (322 aa)) is ribokinase. 198 to 201 (NRRE) serves as a coordination point for ATP. Asp267 is a catalytic residue. Positions 350–479 (FTNGCFDLVH…TSSLVAKART (130 aa)) are cytidylyltransferase.

The protein in the N-terminal section; belongs to the carbohydrate kinase PfkB family. In the C-terminal section; belongs to the cytidylyltransferase family. As to quaternary structure, homodimer.

The catalysed reaction is D-glycero-beta-D-manno-heptose 7-phosphate + ATP = D-glycero-beta-D-manno-heptose 1,7-bisphosphate + ADP + H(+). It carries out the reaction D-glycero-beta-D-manno-heptose 1-phosphate + ATP + H(+) = ADP-D-glycero-beta-D-manno-heptose + diphosphate. It participates in nucleotide-sugar biosynthesis; ADP-L-glycero-beta-D-manno-heptose biosynthesis; ADP-L-glycero-beta-D-manno-heptose from D-glycero-beta-D-manno-heptose 7-phosphate: step 1/4. The protein operates within nucleotide-sugar biosynthesis; ADP-L-glycero-beta-D-manno-heptose biosynthesis; ADP-L-glycero-beta-D-manno-heptose from D-glycero-beta-D-manno-heptose 7-phosphate: step 3/4. In terms of biological role, catalyzes the phosphorylation of D-glycero-D-manno-heptose 7-phosphate at the C-1 position to selectively form D-glycero-beta-D-manno-heptose-1,7-bisphosphate. Its function is as follows. Catalyzes the ADP transfer from ATP to D-glycero-beta-D-manno-heptose 1-phosphate, yielding ADP-D-glycero-beta-D-manno-heptose. The chain is Bifunctional protein HldE from Azorhizobium caulinodans (strain ATCC 43989 / DSM 5975 / JCM 20966 / LMG 6465 / NBRC 14845 / NCIMB 13405 / ORS 571).